Here is a 721-residue protein sequence, read N- to C-terminus: Polyribonucleotide nucleotidyltransferase (721 aa).

Positions 495 and 501 each coordinate Mg(2+). Residues 562–621 (PRLLSFRIDPELIGTVIGPGGRTIKGITERTNTKIDIEDGGIVTIASHDGAAAEEAQKII) form the KH domain. The S1 motif domain maps to 631-699 (GEIFPGVVTR…SRGRINLTLR (69 aa)).

It belongs to the polyribonucleotide nucleotidyltransferase family. The cofactor is Mg(2+).

It localises to the cytoplasm. The enzyme catalyses RNA(n+1) + phosphate = RNA(n) + a ribonucleoside 5'-diphosphate. In terms of biological role, involved in mRNA degradation. Catalyzes the phosphorolysis of single-stranded polyribonucleotides processively in the 3'- to 5'-direction. The sequence is that of Polyribonucleotide nucleotidyltransferase from Prochlorococcus marinus subsp. pastoris (strain CCMP1986 / NIES-2087 / MED4).